The sequence spans 349 residues: Alanine racemase (349 aa).

Lys35 serves as the catalytic Proton acceptor; specific for D-alanine. Lys35 carries the N6-(pyridoxal phosphate)lysine modification. Arg130 is a binding site for substrate. Residue Tyr244 is the Proton acceptor; specific for L-alanine of the active site. Met292 provides a ligand contact to substrate.

It belongs to the alanine racemase family. Requires pyridoxal 5'-phosphate as cofactor.

It carries out the reaction L-alanine = D-alanine. It participates in amino-acid biosynthesis; D-alanine biosynthesis; D-alanine from L-alanine: step 1/1. In terms of biological role, catalyzes the interconversion of L-alanine and D-alanine. May also act on other amino acids. This is Alanine racemase (alr) from Cereibacter sphaeroides (strain ATCC 17025 / ATH 2.4.3) (Rhodobacter sphaeroides).